The chain runs to 393 residues: Pre-mRNA-splicing regulator WTAP (393 aa).

The segment at 240-393 (QQQIQTSGNR…SSVNVQGSVL (154 aa)) is disordered. Over residues 254 to 267 (ESKDEGETSGKDCG) the composition is skewed to basic and acidic residues. The segment covering 272–286 (GPSNGGSSHQRTHSS) has biased composition (polar residues). The segment covering 310-319 (LPNHSEERTS) has biased composition (basic and acidic residues). The span at 320–353 (RGGSSYMNQLSTGYESVDSPTGSENSLTHQSNDT) shows a compositional bias: polar residues. The segment covering 354 to 365 (DSNHDSQEEKPV) has biased composition (basic and acidic residues). Residues 369–393 (GNRTVSSRHLQNGLDSSVNVQGSVL) show a composition bias toward polar residues.

This sequence belongs to the fl(2)d family. As to quaternary structure, component of the WMM complex, a N6-methyltransferase complex composed of a catalytic subcomplex, named MAC, and of an associated subcomplex, named MACOM. Component of the MACOM subcomplex.

It localises to the nucleus speckle. The protein localises to the nucleus. It is found in the nucleoplasm. Associated component of the WMM complex, a complex that mediates N6-methyladenosine (m6A) methylation of RNAs, a modification that plays a role in the efficiency of mRNA splicing and RNA processing. The protein is Pre-mRNA-splicing regulator WTAP of Xenopus tropicalis (Western clawed frog).